The chain runs to 288 residues: Glycine--tRNA ligase alpha subunit (288 aa).

This sequence belongs to the class-II aminoacyl-tRNA synthetase family. As to quaternary structure, tetramer of two alpha and two beta subunits.

It localises to the cytoplasm. It carries out the reaction tRNA(Gly) + glycine + ATP = glycyl-tRNA(Gly) + AMP + diphosphate. The protein is Glycine--tRNA ligase alpha subunit of Rickettsia canadensis (strain McKiel).